A 605-amino-acid polypeptide reads, in one-letter code: Replication and transcription activator (605 aa).

Disordered stretches follow at residues 307–381 and 447–501; these read SLPS…EPEQ and RIRP…TPEA. The segment covering 321–338 has biased composition (low complexity); the sequence is SADCGDSSSSSSDSGNSD. Basic and acidic residues predominate over residues 341 to 353; that stretch reads QSEREEARAEAPR. Residues 355–364 show a composition bias toward basic residues; sequence RAPKSRRTSR.

This sequence belongs to the herpesviridae Rta family. As to quaternary structure, interacts with human ATF7IP protein, leading to promote and regulate host genes in virus-infected cells. Interacts with RNA polymerase III complex; this interaction downregulates small RNA transcription and 5'-pppRNA production.

Its subcellular location is the host nucleus. It localises to the virion tegument. In terms of biological role, immediate-early transcription factor that controls the initiation of viral lytic gene expression and lytic reactivation from latency. Triggers lytic replication, and initiates a cellular senescence program in epithelial cells. Up-regulates human DCR3/TNFRSF6B by directly binding to its receptor. Globally induces a proteasome-dependent loss of SUMOylated proteins in the host cell and the loss of promeylocytic leukemia nuclear bodies. Improves the stability of the triplex capsid protein TRX1 by reducing the ubiquitination level of the latter. Mediates evasion of inflammasome activation and antiviral responses (T- and NK cell activation) during EBV early lytic infection. This is Replication and transcription activator from Epstein-Barr virus (strain GD1) (HHV-4).